The primary structure comprises 266 residues: Undecaprenyl-diphosphatase (266 aa).

The next 8 membrane-spanning stretches (helical) occupy residues 2–22 (INILNAIILGIVQGITEFLPI), 39–59 (LPIIFDIYLHLATVLVIIIYY), 86–106 (LKLILLILIITIVTGVVGTFI), 112–132 (MFILPFILINFIITGILILML), 145–165 (ILLVGIFIGLMQGLGAFPGIS), 184–204 (AFEISFLSLIPIVFGAILFKY), 212–232 (MVLNFFEINLGALVAFVVGII), and 246–266 (LYYFSIYLFALSITFCCFFRI).

The protein belongs to the UppP family.

The protein resides in the cell inner membrane. It catalyses the reaction di-trans,octa-cis-undecaprenyl diphosphate + H2O = di-trans,octa-cis-undecaprenyl phosphate + phosphate + H(+). Its function is as follows. Catalyzes the dephosphorylation of undecaprenyl diphosphate (UPP). Confers resistance to bacitracin. This chain is Undecaprenyl-diphosphatase, found in Borrelia garinii subsp. bavariensis (strain ATCC BAA-2496 / DSM 23469 / PBi) (Borreliella bavariensis).